The chain runs to 1073 residues: TSC22 domain family protein 1 (1073 aa).

The tract at residues 1 to 98 (MHQPPESTAA…SQAQLQAQPL (98 aa)) is required for interaction with TGFBR1 and promotion of TGF-beta signaling. 6 disordered regions span residues 22–110 (MAHP…KKSG), 125–205 (ISSN…PHLP), 220–288 (LHHH…SPAS), 458–486 (VTSE…SVGS), 607–628 (YSQA…QQLQ), and 742–766 (VQQP…QVVP). Residues 36–45 (GSASALNAAG) are compositionally biased toward low complexity. Over residues 58 to 70 (FPPPSLLQPPPPA) the composition is skewed to pro residues. Residues 84–100 (SLNLLSQAQLQAQPLAP) show a composition bias toward low complexity. Residues 133 to 142 (EDTESYDDLD) are compositionally biased toward acidic residues. Over residues 220–240 (LHHHHQIHHGHHLQHGHHHPS) the composition is skewed to basic residues. Polar residues predominate over residues 257–271 (PVSRKLSTTGSSDSI). Phosphoserine is present on Ser-263. Composition is skewed to low complexity over residues 272 to 288 (TPVA…SPAS) and 465 to 483 (TSGS…YTES). The segment covering 614-625 (VQTPLPGAPPPQ) has biased composition (pro residues). The span at 742-764 (VQQPSTQVPPSVIQQGAPPSSQV) shows a compositional bias: polar residues. A leucine-zipper region spans residues 1006–1027 (LKEQIKELIEKNSQLEQENNLL). Positions 1037 to 1073 (AQFQAQLQTGSPPATTQPQGTTQPPAQPASQGSGPTA) are disordered. Low complexity predominate over residues 1044-1073 (QTGSPPATTQPQGTTQPPAQPASQGSGPTA).

The protein belongs to the TSC-22/Dip/Bun family. In terms of assembly, forms homodimers. Forms heterodimers. Component of a complex composed of TSC22D1 (via N-terminus), TGFBR1 and TGFBR2; the interaction between TSC22D1 and TGFBR1 is inhibited by SMAD7 and promoted by TGFB1. Interacts with SMAD7; the interaction requires TGF-beta and the interaction is inhibited by TGFBR1. Interacts with TPT1/fortilin; interaction results in the destabilization of TSC22D1 protein and prevents TSC22D1-mediated apoptosis. Interacts with SMAD4 (via N-terminus). Interacts with ACVRL1/ALK1, ACVR1/ALK2, BMPR1A/ALK3, ACVR1B/ALK4, BMPR1B/ALK6, ACVR2A/ACTRII, and BMPR2. Interacts with SMAD6. Interacts with TFE3; the interaction is enhanced in the presence of TGF-beta. Forms a heterodimer with TSC22D4/THG1. As to quaternary structure, forms a heterodimer with TSC22D4/THG1. Interacts with histone H1-2. Interacts with GNL3. In terms of assembly, interacts with histone H1-2. As to expression, ubiquitously expressed in adult tissues. Expressed in the postmitotic epithelial compartment at the top of intestinal mucosal villi.

It is found in the cytoplasm. It localises to the nucleus. The protein resides in the cell membrane. Its subcellular location is the mitochondrion. Functionally, transcriptional repressor. Acts on the C-type natriuretic peptide (CNP) promoter. Acts to promote CASP3-mediated apoptosis. Positively regulates TGF-beta signaling by interacting with SMAD7 which inhibits binding of SMAD7 to TGFBR1, preventing recruitment of SMURF ubiquitin ligases to TGFBR1 and inhibiting SMURF-mediated ubiquitination and degradation of TGFBR1. Contributes to enhancement of TGF-beta signaling by binding to and modulating the transcription activator activity of SMAD4. Promotes TGF-beta-induced transcription of COL1A2; via its interaction with TFE3 at E-boxes in the gene proximal promoter. Plays a role in the repression of hematopoietic precursor cell growth. Promotes IL2 deprivation-induced apoptosis in T-lymphocytes, via repression of TSC22D3/GILZ transcription and activation of the caspase cascade. May act to negatively regulate TGFB3 signaling and thereby inhibit cell death in mammary gland cells. Its function is as follows. Positively regulates cell death in response to TGFB3 during mammary gland involution. This is TSC22 domain family protein 1 from Homo sapiens (Human).